The sequence spans 543 residues: CTP synthase (543 aa).

The tract at residues 1–265 is amidoligase domain; the sequence is MTRYIFVTGG…DDFVVERFGL (265 aa). Ser13 lines the CTP pocket. Position 13 (Ser13) interacts with UTP. ATP-binding positions include 14–19 and Asp71; that span reads SLGKGI. Residues Asp71 and Glu139 each coordinate Mg(2+). CTP-binding positions include 146–148, 186–191, and Lys222; these read DIE and KTKPTQ. UTP-binding positions include 186 to 191 and Lys222; that span reads KTKPTQ. Residues 290-541 enclose the Glutamine amidotransferase type-1 domain; that stretch reads TIAMVGKYME…VKAALAQHQK (252 aa). L-glutamine is bound at residue Gly351. Cys378 serves as the catalytic Nucleophile; for glutamine hydrolysis. Residues 379 to 382, Glu402, and Arg469 each bind L-glutamine; that span reads LGMQ. Catalysis depends on residues His514 and Glu516.

It belongs to the CTP synthase family. In terms of assembly, homotetramer.

It carries out the reaction UTP + L-glutamine + ATP + H2O = CTP + L-glutamate + ADP + phosphate + 2 H(+). It catalyses the reaction L-glutamine + H2O = L-glutamate + NH4(+). The enzyme catalyses UTP + NH4(+) + ATP = CTP + ADP + phosphate + 2 H(+). The protein operates within pyrimidine metabolism; CTP biosynthesis via de novo pathway; CTP from UDP: step 2/2. With respect to regulation, allosterically activated by GTP, when glutamine is the substrate; GTP has no effect on the reaction when ammonia is the substrate. The allosteric effector GTP functions by stabilizing the protein conformation that binds the tetrahedral intermediate(s) formed during glutamine hydrolysis. Inhibited by the product CTP, via allosteric rather than competitive inhibition. Functionally, catalyzes the ATP-dependent amination of UTP to CTP with either L-glutamine or ammonia as the source of nitrogen. Regulates intracellular CTP levels through interactions with the four ribonucleotide triphosphates. This Pseudomonas syringae pv. tomato (strain ATCC BAA-871 / DC3000) protein is CTP synthase.